A 389-amino-acid chain; its full sequence is Fructose-1,6-bisphosphate aldolase/phosphatase (389 aa).

Asp17 (proton acceptor; for FBP phosphatase activity) is an active-site residue. Asp17, His24, Asp57, and Asp58 together coordinate Mg(2+). His24 contributes to the beta-D-fructose 1,6-bisphosphate binding site. Dihydroxyacetone phosphate is bound at residue His24. Tyr95 is a beta-D-fructose 1,6-bisphosphate binding site. Residue Gln99 participates in Mg(2+) binding. Gly108–Asn109 contributes to the beta-D-fructose 1,6-bisphosphate binding site. Asp136 lines the Mg(2+) pocket. A beta-D-fructose 1,6-bisphosphate-binding site is contributed by Lys137. Lys137 provides a ligand contact to dihydroxyacetone phosphate. Residue Tyr233 is the Proton donor/acceptor; for FBP aldolase activity of the active site. The Mg(2+) site is built by Lys236, Asp237, and Asp238. The active-site Schiff-base intermediate with DHAP; for FBP aldolase activity is Lys236. Beta-D-fructose 1,6-bisphosphate is bound by residues Gln246–Ser247, Arg270, Asp291, and Tyr352. Positions 270 and 291 each coordinate dihydroxyacetone phosphate.

Belongs to the FBP aldolase/phosphatase family. Homooctamer; dimer of tetramers. Mg(2+) serves as cofactor.

The enzyme catalyses beta-D-fructose 1,6-bisphosphate + H2O = beta-D-fructose 6-phosphate + phosphate. It catalyses the reaction beta-D-fructose 1,6-bisphosphate = D-glyceraldehyde 3-phosphate + dihydroxyacetone phosphate. It functions in the pathway carbohydrate biosynthesis; gluconeogenesis. In terms of biological role, catalyzes two subsequent steps in gluconeogenesis: the aldol condensation of dihydroxyacetone phosphate (DHAP) and glyceraldehyde-3-phosphate (GA3P) to fructose-1,6-bisphosphate (FBP), and the dephosphorylation of FBP to fructose-6-phosphate (F6P). This is Fructose-1,6-bisphosphate aldolase/phosphatase from Methanocaldococcus jannaschii (strain ATCC 43067 / DSM 2661 / JAL-1 / JCM 10045 / NBRC 100440) (Methanococcus jannaschii).